The chain runs to 137 residues: Large ribosomal subunit protein bL12 (137 aa).

It belongs to the bacterial ribosomal protein bL12 family. In terms of assembly, homodimer. Part of the ribosomal stalk of the 50S ribosomal subunit. Forms a multimeric L10(L12)X complex, where L10 forms an elongated spine to which 2 to 4 L12 dimers bind in a sequential fashion. Binds GTP-bound translation factors.

In terms of biological role, forms part of the ribosomal stalk which helps the ribosome interact with GTP-bound translation factors. Is thus essential for accurate translation. The sequence is that of Large ribosomal subunit protein bL12 from Gloeobacter violaceus (strain ATCC 29082 / PCC 7421).